The primary structure comprises 339 residues: Phenylalanine--tRNA ligase alpha subunit (339 aa).

Glu254 is a Mg(2+) binding site.

The protein belongs to the class-II aminoacyl-tRNA synthetase family. Phe-tRNA synthetase alpha subunit type 1 subfamily. As to quaternary structure, tetramer of two alpha and two beta subunits. Mg(2+) serves as cofactor.

The protein resides in the cytoplasm. The enzyme catalyses tRNA(Phe) + L-phenylalanine + ATP = L-phenylalanyl-tRNA(Phe) + AMP + diphosphate + H(+). In Clostridium botulinum (strain Alaska E43 / Type E3), this protein is Phenylalanine--tRNA ligase alpha subunit.